An 804-amino-acid chain; its full sequence is Zinc finger protein 541 (804 aa).

Disordered regions lie at residues 21–120 and 133–197; these read SKAS…NPDI and TLDL…GNPR. A C2H2-type 1 zinc finger spans residues 285-307; that stretch reads FICKNCSQMFYTEKGLSSHMCFH. Positions 379 to 426 are disordered; the sequence is MEQEKDGEERDSKESSQQRKRKKRPPPKRLFIPPPPSTAGEPGPAGCH. The span at 380 to 395 shows a compositional bias: basic and acidic residues; that stretch reads EQEKDGEERDSKESSQ. A compositionally biased stretch (basic residues) spans 396 to 405; it reads QRKRKKRPPP. The ELM2 domain occupies 509–601; the sequence is PHINIGSRFQ…VALETLLLRG (93 aa). The SANT domain occupies 616–667; sequence TGSDVWTPIEKRLFKKAFYAHKKDFYLIHKTIQTKTVAQCVEYYYIWKKMIK. A disordered region spans residues 680–743; it reads VKREPEEVER…TPEPSGSVES (64 aa). Residues 690-721 are compositionally biased toward basic and acidic residues; it reads TEEKVPCSPRERPSHHPIPELKIKTKSYRRES. A C2H2-type 2 zinc finger spans residues 747–769; sequence FPCRECERVFDKIKSRNAHMKRH.

Interacts with DNTTIP1. Identified in a complex with KCDT19, HDAC1 and HSPA2s. Component of a histone deacetylase complex containing DNTTIP1, ZNF541, HDAC1 and HDAC2. Identified in a complex with HDAC1, HDAC2, DNTTIP1 and KCTD19.

The protein resides in the nucleus. Its function is as follows. Transcription regulator which is essential for male fertility and for the completion of meiotic prophase in spermatocytes. Regulates progression of the pachytene stage of meiotic prophase by activating the expression of genes involved in meiosis and post-meiosis during spermatogenesis. Maintains the repression of pre-pachytene transcriptional programs, including meiotic double-strand breaks (DSB) formation genes in pachytene spermatocytes and suppresses aberrant DSB formation after mid-pachytene, thus ensuring meiosis progression. This chain is Zinc finger protein 541 (ZNF541), found in Macaca fascicularis (Crab-eating macaque).